The following is a 476-amino-acid chain: H2.0-like homeobox protein (476 aa).

Disordered regions lie at residues 121 to 170 (HLPQ…SSKD), 328 to 401 (WRHS…HQTT), and 413 to 476 (TASS…LAGL). Residues 158 to 168 (HHSGSAPAPSS) show a composition bias toward low complexity. The homeobox DNA-binding region spans 273 to 332 (RSWSRAVFSNLQRKGLEKRFEIQKYVTKPDRKQLAAMLGLTDAQVKVWFQNRRMKWRHSK). Composition is skewed to basic and acidic residues over residues 331–346 (SKEA…EAGE) and 355–368 (EGER…RSEG). The segment covering 369–379 (EAESESSDSES) has biased composition (acidic residues). Positions 386-397 (DTERTEGTERSL) are enriched in basic and acidic residues. Positions 413 to 446 (TASSSASGSSFSFSSSSSLGSSNGSAGSASSLGS) are enriched in low complexity. A compositionally biased stretch (polar residues) spans 455 to 464 (HQPSVTSGPQ).

It belongs to the H2.0 homeobox family.

It localises to the nucleus. Functionally, transcription factor required for TBX21/T-bet-dependent maturation of Th1 cells as well as maintenance of Th1-specific gene expression. Involved in embryogenesis and hematopoiesis. The protein is H2.0-like homeobox protein (Hlx) of Rattus norvegicus (Rat).